The chain runs to 184 residues: Glutathione-regulated potassium-efflux system ancillary protein KefG (184 aa).

This sequence belongs to the NAD(P)H dehydrogenase (quinone) family. KefG subfamily. As to quaternary structure, interacts with KefB.

The protein localises to the cell inner membrane. It catalyses the reaction a quinone + NADH + H(+) = a quinol + NAD(+). The catalysed reaction is a quinone + NADPH + H(+) = a quinol + NADP(+). Its function is as follows. Regulatory subunit of a potassium efflux system that confers protection against electrophiles. Required for full activity of KefB. This Erwinia tasmaniensis (strain DSM 17950 / CFBP 7177 / CIP 109463 / NCPPB 4357 / Et1/99) protein is Glutathione-regulated potassium-efflux system ancillary protein KefG.